The chain runs to 652 residues: Carboxypeptidase S1 homolog A (652 aa).

An N-terminal signal peptide occupies residues methionine 1–alanine 19. Cysteine 50 and cysteine 121 are joined by a disulfide. N-linked (GlcNAc...) asparagine glycosylation is found at asparagine 77, asparagine 132, asparagine 161, asparagine 168, asparagine 184, and asparagine 202. Residue serine 238 is part of the active site. Residues asparagine 260, asparagine 299, asparagine 347, and asparagine 410 are each glycosylated (N-linked (GlcNAc...) asparagine). 2 disulfide bridges follow: cysteine 325-cysteine 361 and cysteine 332-cysteine 354. The active site involves aspartate 458. Cysteine 461 contributes to the substrate binding site. Residues asparagine 474, asparagine 492, and asparagine 505 are each glycosylated (N-linked (GlcNAc...) asparagine). Histidine 516 is a catalytic residue. Glutamate 517 provides a ligand contact to substrate. The interval alanine 608–threonine 627 is disordered. Low complexity predominate over residues threonine 618 to threonine 627. A lipid anchor (GPI-anchor amidated glycine) is attached at glycine 629. Residues serine 630–leucine 652 constitute a propeptide, removed in mature form.

This sequence belongs to the peptidase S10 family.

It is found in the cell membrane. The enzyme catalyses Preferential release of a C-terminal arginine or lysine residue.. Functionally, extracellular serine carboxypeptidase that contributes to pathogenicity. The protein is Carboxypeptidase S1 homolog A (SCPA) of Trichophyton rubrum (Athlete's foot fungus).